Consider the following 66-residue polypeptide: Large ribosomal subunit protein uL29 (66 aa).

Belongs to the universal ribosomal protein uL29 family.

In Pseudothermotoga lettingae (strain ATCC BAA-301 / DSM 14385 / NBRC 107922 / TMO) (Thermotoga lettingae), this protein is Large ribosomal subunit protein uL29.